Here is a 593-residue protein sequence, read N- to C-terminus: Protein PSP2 (593 aa).

The span at 56–65 shows a compositional bias: basic and acidic residues; it reads AGEHQRDGHQ. A disordered region spans residues 56 to 101; it reads AGEHQRDGHQQHPHGGHGPMNRSRFSNAGPFGGGSMGDFANHHHPL. Phosphoserine occurs at positions 150 and 238. 2 disordered regions span residues 227 to 248 and 280 to 593; these read KPFI…KPVD and DSMA…DMPL. 2 stretches are compositionally biased toward polar residues: residues 231-241 and 280-290; these read TKTQRSKSNPF and DSMATTATGSK. Serine 340 is subject to Phosphoserine. Over residues 347–402 the composition is skewed to basic and acidic residues; sequence SKPDKSDEFKGGDEQGFEKGGDDKAQLDVSNDKDKGSETDVDKQFTFKNVEREHSM. The span at 408 to 426 shows a compositional bias: low complexity; it reads NGNHNNNNGNFRGSNRYRG. Omega-N-methylarginine is present on residues arginine 419, arginine 425, and arginine 440. Position 443 is a dimethylated arginine (arginine 443). Omega-N-methylarginine is present on arginine 447. Positions 449–477 are enriched in low complexity; the sequence is GSSYNNNNNNTNDNNNNNNNSSSNNNNGS. Polar residues-rich tracts occupy residues 486–497 and 505–516; these read EEGLTSDSSLDA and FTNSTSNTQQYS. Phosphoserine is present on serine 522. Residues 534-545 are compositionally biased toward low complexity; that stretch reads RNNGRGNYNSSG. Omega-N-methylarginine is present on residues arginine 538, arginine 551, and arginine 575. The segment covering 546–563 has biased composition (gly residues); sequence MNGGSRGRGFGRGRGFGR. Residues 578–587 are compositionally biased toward low complexity; that stretch reads SGNYSNYNNR.

The protein localises to the cytoplasm. The protein resides in the P-body. Its subcellular location is the stress granule. DNA polymerase alpha mutation suppressor. Suppressor of group II intron splicing defects of a mutation in MRS2. May play a role in mitochondrial mRNA splicing. In Saccharomyces cerevisiae (strain ATCC 204508 / S288c) (Baker's yeast), this protein is Protein PSP2.